A 600-amino-acid chain; its full sequence is Integrator complex subunit 11 (600 aa).

H68, H70, D72, H73, H157, and D178 together coordinate Zn(2+). Positions 68-73 (HFHLDH) match the HXHXDH motif motif. The active site involves E203. A Glycyl lysine isopeptide (Lys-Gly) (interchain with G-Cter in SUMO) cross-link involves residue K381. Zn(2+) is bound at residue H414. Residues K462 and K475 each participate in a glycyl lysine isopeptide (Lys-Gly) (interchain with G-Cter in SUMO) cross-link. The Nuclear localization signal signature appears at 469-479 (LLPEAKKPRLL).

The protein belongs to the metallo-beta-lactamase superfamily. RNA-metabolizing metallo-beta-lactamase-like family. INTS11 subfamily. Component of the Integrator complex, composed of core subunits INTS1, INTS2, INTS3, INTS4, INTS5, INTS6, INTS7, INTS8, INTS9/RC74, INTS10, INTS11/CPSF3L, INTS12, INTS13, INTS14 and INTS15. The core complex associates with protein phosphatase 2A subunits PPP2CA and PPP2R1A, to form the Integrator-PP2A (INTAC) complex. INTS11 is part of the RNA endonuclease subcomplex, composed of INTS4, INTS9, INTS11 and inositol hexakisphosphate (InsP6). Interacts with WDR73; interaction is required for the assembly of the RNA endonuclease subcomplex in the cytoplasm. Interacts with BRAT1; interaction is required for the assembly of the RNA endonuclease subcomplex and inhibits the endonuclease activity of INTS11 before formation of mature integrator complex. Zn(2+) is required as a cofactor. In terms of processing, sumoylated; sumoylation regulates its subcellular location and is required for integrator complex integrity.

Its subcellular location is the nucleus. The protein localises to the cytoplasm. Its activity is regulated as follows. The RNA endonuclease activity is inhibited by BRAT1 that forms hyrogen bond and hydrophobic interactions with the active site. In terms of biological role, RNA endonuclease component of the integrator complex, a multiprotein complex that terminates RNA polymerase II (Pol II) transcription in the promoter-proximal region of genes. The integrator complex provides a quality checkpoint during transcription elongation by driving premature transcription termination of transcripts that are unfavorably configured for transcriptional elongation: the complex terminates transcription by (1) catalyzing dephosphorylation of the C-terminal domain (CTD) of Pol II subunit POLR2A/RPB1 and SUPT5H/SPT5, (2) degrading the exiting nascent RNA transcript via endonuclease activity and (3) promoting the release of Pol II from bound DNA. The integrator complex is also involved in terminating the synthesis of non-coding Pol II transcripts, such as enhancer RNAs (eRNAs), small nuclear RNAs (snRNAs), telomerase RNAs and long non-coding RNAs (lncRNAs). Within the integrator complex, INTS11 constitutes the RNA endonuclease subunit that degrades exiting nascent RNA transcripts. Mediates recruitment of cytoplasmic dynein to the nuclear envelope, probably as component of the integrator complex. The polypeptide is Integrator complex subunit 11 (Mus musculus (Mouse)).